A 416-amino-acid polypeptide reads, in one-letter code: MIKKSALITLFLVSLILGVSLSQKPFYCQAPEPTPSLNTDGLTLKMVQILTRHGDRTPLYSTLKPTMNTWDCNLGWLMVSSLNNVPGAATDVDRLFRKVYMPNREYFPGNCSDGQLTSLGFQQHLQLGQSLRQLYVDKYELLPSELSVDAASTIWVRSTDVPRTIQSVQGHLTALFPPTTVTSGSGIPIININTMDNYYENMTPNPTLCPELAVLIANTTTTPEWGEFITNTTQLKEDVMETLGISVFPGWSSLMDLFFATQCHDFPLPEGVTQDMVTQVYEAAYWQYQYQLSFPMIARLGMSTFLEEVVDNIRAFVNGTSSVKYIVFSGHDDSVGPFTNLFGLMKEWPPYASHVELELWSDEKDNYFLQFKFNGQSYTLNGCEDVMCPIDSFFETAYSILVPNYADACSNSTMTF.

Residues 1-22 (MIKKSALITLFLVSLILGVSLS) form the signal peptide. N-linked (GlcNAc...) asparagine glycans are attached at residues asparagine 110, asparagine 218, asparagine 231, asparagine 318, and asparagine 411.

It belongs to the histidine acid phosphatase family. In terms of assembly, component of the counting factor (CF) complex, which includes cf60, cf50, cf45-1 and ctnA.

The protein resides in the secreted. Its function is as follows. Cell-counting factor that limits the maximum size of the multicellular structure. Does not possess acid phosphatase activity. Cells with decreased levels of this protein form large groups while cells overexpressing this protein form small groups. The chain is Counting factor 60 (cf60) from Dictyostelium discoideum (Social amoeba).